The sequence spans 494 residues: 4-trimethylaminobutyraldehyde dehydrogenase (494 aa).

The residue at position 2 (Ser-2) is an N-acetylserine. N6-acetyllysine; alternate is present on Lys-30. Lys-30 carries the post-translational modification N6-succinyllysine; alternate. Lys-59 is modified (N6-succinyllysine). NAD(+) is bound by residues Lys-180 and 232–236; that span reads GSVPT. The active-site Proton acceptor is Glu-254. Cys-288 serves as the catalytic Nucleophile. Position 298 is an N6-acetyllysine (Lys-298). Lys-303 is modified (N6-acetyllysine; alternate). An N6-succinyllysine; alternate modification is found at Lys-303. Lys-344 carries the N6-acetyllysine modification. Glu-391 is an NAD(+) binding site.

This sequence belongs to the aldehyde dehydrogenase family. In terms of assembly, homotetramer.

The protein localises to the cytoplasm. It is found in the cytosol. It carries out the reaction 4-(trimethylamino)butanal + NAD(+) + H2O = 4-(trimethylamino)butanoate + NADH + 2 H(+). It catalyses the reaction an aldehyde + NAD(+) + H2O = a carboxylate + NADH + 2 H(+). The catalysed reaction is 4-aminobutanal + NAD(+) + H2O = 4-aminobutanoate + NADH + 2 H(+). The enzyme catalyses formaldehyde + NAD(+) + H2O = formate + NADH + 2 H(+). It carries out the reaction acetaldehyde + NAD(+) + H2O = acetate + NADH + 2 H(+). It catalyses the reaction imidazole-4-acetaldehyde + NAD(+) + H2O = imidazole-4-acetate + NADH + 2 H(+). The catalysed reaction is acrolein + NAD(+) + H2O = acrylate + NADH + 2 H(+). The enzyme catalyses (5-hydroxyindol-3-yl)acetaldehyde + NAD(+) + H2O = (5-hydroxyindol-3-yl)acetate + NADH + 2 H(+). It carries out the reaction 3,4-dihydroxyphenylacetaldehyde + NAD(+) + H2O = 3,4-dihydroxyphenylacetate + NADH + 2 H(+). It catalyses the reaction spermine monoaldehyde + NAD(+) + H2O = N-(2-carboxyethyl)spermidine + NADH + 2 H(+). The catalysed reaction is propanal + NAD(+) + H2O = propanoate + NADH + 2 H(+). The enzyme catalyses butanal + NAD(+) + H2O = butanoate + NADH + 2 H(+). It carries out the reaction pentanal + NAD(+) + H2O = pentanoate + NADH + 2 H(+). It catalyses the reaction hexanal + NAD(+) + H2O = hexanoate + NADH + 2 H(+). The protein operates within amine and polyamine biosynthesis; carnitine biosynthesis. Functionally, converts gamma-trimethylaminobutyraldehyde into gamma-butyrobetaine with high efficiency (in vitro). Can catalyze the irreversible oxidation of a broad range of aldehydes to the corresponding acids in an NAD-dependent reaction, but with low efficiency. Catalyzes the oxidation of aldehydes arising from biogenic amines and polyamines. This Pongo abelii (Sumatran orangutan) protein is 4-trimethylaminobutyraldehyde dehydrogenase (ALDH9A1).